We begin with the raw amino-acid sequence, 188 residues long: Elongation factor P (188 aa).

Lys34 carries the post-translational modification N6-(3,6-diaminohexanoyl)-5-hydroxylysine.

It belongs to the elongation factor P family. May be beta-lysylated on the epsilon-amino group of Lys-34 by the combined action of EpmA and EpmB, and then hydroxylated on the C5 position of the same residue by EpmC (if this protein is present). Lysylation is critical for the stimulatory effect of EF-P on peptide-bond formation. The lysylation moiety may extend toward the peptidyltransferase center and stabilize the terminal 3-CCA end of the tRNA. Hydroxylation of the C5 position on Lys-34 may allow additional potential stabilizing hydrogen-bond interactions with the P-tRNA.

It is found in the cytoplasm. It participates in protein biosynthesis; polypeptide chain elongation. Involved in peptide bond synthesis. Alleviates ribosome stalling that occurs when 3 or more consecutive Pro residues or the sequence PPG is present in a protein, possibly by augmenting the peptidyl transferase activity of the ribosome. Modification of Lys-34 is required for alleviation. This Cronobacter sakazakii (strain ATCC BAA-894) (Enterobacter sakazakii) protein is Elongation factor P.